The sequence spans 223 residues: Superoxide dismutase [Mn], mitochondrial (223 aa).

Residues methionine 1–leucine 24 constitute a mitochondrion transit peptide. Histidine 50, histidine 98, aspartate 184, and histidine 188 together coordinate Mn(2+).

This sequence belongs to the iron/manganese superoxide dismutase family. As to quaternary structure, homotetramer. Mn(2+) serves as cofactor.

It is found in the mitochondrion matrix. It catalyses the reaction 2 superoxide + 2 H(+) = H2O2 + O2. Functionally, destroys superoxide anion radicals which are normally produced within the cells and which are toxic to biological systems. The sequence is that of Superoxide dismutase [Mn], mitochondrial (sod-2) from Onchocerca volvulus.